Reading from the N-terminus, the 225-residue chain is Ribonuclease HII (225 aa).

The 191-residue stretch at 35 to 225 (GLVAGVDEVG…SFRPCQISPD (191 aa)) folds into the RNase H type-2 domain. Residues Asp41, Glu42, and Asp137 each coordinate a divalent metal cation.

Belongs to the RNase HII family. The cofactor is Mn(2+). Requires Mg(2+) as cofactor.

The protein localises to the cytoplasm. The catalysed reaction is Endonucleolytic cleavage to 5'-phosphomonoester.. Functionally, endonuclease that specifically degrades the RNA of RNA-DNA hybrids. The chain is Ribonuclease HII from Nostoc sp. (strain PCC 7120 / SAG 25.82 / UTEX 2576).